Here is a 161-residue protein sequence, read N- to C-terminus: ATP synthase subunit b 1 (161 aa).

The chain crosses the membrane as a helical span at residues Ala5–Ala25.

The protein belongs to the ATPase B chain family. As to quaternary structure, F-type ATPases have 2 components, F(1) - the catalytic core - and F(0) - the membrane proton channel. F(1) has five subunits: alpha(3), beta(3), gamma(1), delta(1), epsilon(1). F(0) has three main subunits: a(1), b(2) and c(10-14). The alpha and beta chains form an alternating ring which encloses part of the gamma chain. F(1) is attached to F(0) by a central stalk formed by the gamma and epsilon chains, while a peripheral stalk is formed by the delta and b chains.

The protein resides in the cell inner membrane. F(1)F(0) ATP synthase produces ATP from ADP in the presence of a proton or sodium gradient. F-type ATPases consist of two structural domains, F(1) containing the extramembraneous catalytic core and F(0) containing the membrane proton channel, linked together by a central stalk and a peripheral stalk. During catalysis, ATP synthesis in the catalytic domain of F(1) is coupled via a rotary mechanism of the central stalk subunits to proton translocation. In terms of biological role, component of the F(0) channel, it forms part of the peripheral stalk, linking F(1) to F(0). The sequence is that of ATP synthase subunit b 1 from Afipia carboxidovorans (strain ATCC 49405 / DSM 1227 / KCTC 32145 / OM5) (Oligotropha carboxidovorans).